We begin with the raw amino-acid sequence, 258 residues long: Type III pantothenate kinase (258 aa).

6 to 13 (DVGNTNTV) provides a ligand contact to ATP. Residues Tyr-100 and 107–110 (GADR) contribute to the substrate site. Asp-109 serves as the catalytic Proton acceptor. Asp-129 lines the K(+) pocket. Thr-132 contacts ATP. Residue Thr-184 coordinates substrate.

The protein belongs to the type III pantothenate kinase family. In terms of assembly, homodimer. It depends on NH4(+) as a cofactor. Requires K(+) as cofactor.

The protein resides in the cytoplasm. It catalyses the reaction (R)-pantothenate + ATP = (R)-4'-phosphopantothenate + ADP + H(+). Its pathway is cofactor biosynthesis; coenzyme A biosynthesis; CoA from (R)-pantothenate: step 1/5. Functionally, catalyzes the phosphorylation of pantothenate (Pan), the first step in CoA biosynthesis. The polypeptide is Type III pantothenate kinase (Bacillus velezensis (strain DSM 23117 / BGSC 10A6 / LMG 26770 / FZB42) (Bacillus amyloliquefaciens subsp. plantarum)).